Reading from the N-terminus, the 276-residue chain is Large ribosomal subunit protein uL2 (276 aa).

The disordered stretch occupies residues P218 to L255.

This sequence belongs to the universal ribosomal protein uL2 family. In terms of assembly, part of the 50S ribosomal subunit. Forms a bridge to the 30S subunit in the 70S ribosome.

Functionally, one of the primary rRNA binding proteins. Required for association of the 30S and 50S subunits to form the 70S ribosome, for tRNA binding and peptide bond formation. It has been suggested to have peptidyltransferase activity; this is somewhat controversial. Makes several contacts with the 16S rRNA in the 70S ribosome. This Clostridium tetani (strain Massachusetts / E88) protein is Large ribosomal subunit protein uL2.